The following is a 249-amino-acid chain: 2-dehydro-3-deoxy-L-rhamnonate dehydrogenase (NAD(+)) (249 aa).

The active-site Proton acceptor is the tyrosine 156.

The protein belongs to the short-chain dehydrogenases/reductases (SDR) family. As to quaternary structure, homotetramer.

The catalysed reaction is 2-dehydro-3-deoxy-L-rhamnonate + NAD(+) = 2,4-didehydro-3-deoxy-L-rhamnonate + NADH + H(+). Its pathway is carbohydrate degradation; L-rhamnose degradation. In terms of biological role, catalyzes the NAD(+)-dependent dehydrogenation of 2-dehydro-3-deoxy-L-rhamnonate to form 2,4-didehydro-3-deoxy-L-rhamnonate. Does not show any detectable activity in the presence of NADP(+). Catalyzes the fourth step in an alternative pathway for rhamnose utilization that does not involve phosphorylated intermediates. In Sphingomonas sp. (strain SKA58), this protein is 2-dehydro-3-deoxy-L-rhamnonate dehydrogenase (NAD(+)).